Consider the following 403-residue polypeptide: Phosphoglycerate kinase (403 aa).

Residues 21 to 23 (DFN), Arg-36, 59 to 62 (HLGR), Arg-119, and Arg-154 each bind substrate. ATP contacts are provided by residues Lys-207, Gly-299, Glu-330, and 357–360 (GGDA).

It belongs to the phosphoglycerate kinase family. As to quaternary structure, monomer.

Its subcellular location is the cytoplasm. It catalyses the reaction (2R)-3-phosphoglycerate + ATP = (2R)-3-phospho-glyceroyl phosphate + ADP. It functions in the pathway carbohydrate degradation; glycolysis; pyruvate from D-glyceraldehyde 3-phosphate: step 2/5. This chain is Phosphoglycerate kinase, found in Chlamydia felis (strain Fe/C-56) (Chlamydophila felis).